The primary structure comprises 464 residues: Bifunctional protein GlmU (464 aa).

Positions 1–236 (MRAVILAAGL…PTEALGVNTR (236 aa)) are pyrophosphorylase. UDP-N-acetyl-alpha-D-glucosamine is bound by residues 6-9 (LAAG), Lys20, and 77-78 (GT). Asp102 contributes to the Mg(2+) binding site. Residues Gly145, Glu161, Asn176, and Asn234 each contribute to the UDP-N-acetyl-alpha-D-glucosamine site. Residue Asn234 participates in Mg(2+) binding. Residues 237 to 257 (WDLALVENVIKLKIARYWAER) are linker. The interval 258–464 (GVTVHYPETV…GRGKKKLQKD (207 aa)) is N-acetyltransferase. Positions 340 and 358 each coordinate UDP-N-acetyl-alpha-D-glucosamine. His370 serves as the catalytic Proton acceptor. Residues Tyr373 and Asn384 each coordinate UDP-N-acetyl-alpha-D-glucosamine. Residues Ala387, 393–394 (NY), Ser412, Gly430, and Arg447 each bind acetyl-CoA.

In the N-terminal section; belongs to the N-acetylglucosamine-1-phosphate uridyltransferase family. It in the C-terminal section; belongs to the transferase hexapeptide repeat family. As to quaternary structure, homotrimer. Mg(2+) serves as cofactor.

The protein localises to the cytoplasm. The catalysed reaction is alpha-D-glucosamine 1-phosphate + acetyl-CoA = N-acetyl-alpha-D-glucosamine 1-phosphate + CoA + H(+). The enzyme catalyses N-acetyl-alpha-D-glucosamine 1-phosphate + UTP + H(+) = UDP-N-acetyl-alpha-D-glucosamine + diphosphate. It participates in nucleotide-sugar biosynthesis; UDP-N-acetyl-alpha-D-glucosamine biosynthesis; N-acetyl-alpha-D-glucosamine 1-phosphate from alpha-D-glucosamine 6-phosphate (route II): step 2/2. The protein operates within nucleotide-sugar biosynthesis; UDP-N-acetyl-alpha-D-glucosamine biosynthesis; UDP-N-acetyl-alpha-D-glucosamine from N-acetyl-alpha-D-glucosamine 1-phosphate: step 1/1. It functions in the pathway bacterial outer membrane biogenesis; LPS lipid A biosynthesis. Its function is as follows. Catalyzes the last two sequential reactions in the de novo biosynthetic pathway for UDP-N-acetylglucosamine (UDP-GlcNAc). The C-terminal domain catalyzes the transfer of acetyl group from acetyl coenzyme A to glucosamine-1-phosphate (GlcN-1-P) to produce N-acetylglucosamine-1-phosphate (GlcNAc-1-P), which is converted into UDP-GlcNAc by the transfer of uridine 5-monophosphate (from uridine 5-triphosphate), a reaction catalyzed by the N-terminal domain. The polypeptide is Bifunctional protein GlmU (Aquifex aeolicus (strain VF5)).